We begin with the raw amino-acid sequence, 615 residues long: Increased rDNA silencing protein 4 (615 aa).

Disordered stretches follow at residues 38 to 135 (SNEV…SSHS), 152 to 260 (LLGI…NRSQ), 277 to 304 (PSIA…NYSS), and 323 to 445 (KPKH…NEDK). Residues 50 to 65 (VSRNPQTRLSEPSLQK) show a composition bias toward polar residues. Low complexity-rich tracts occupy residues 121 to 135 (HSQS…SSHS) and 157 to 168 (SRSSSRNGSNES). At S180 the chain carries Phosphoserine. The segment covering 184 to 198 (LLTSFSSGRRLSSSS) has biased composition (low complexity). Residues 248 to 260 (NPDTSDVISNRSQ) show a composition bias toward polar residues. The span at 281–290 (SSNTTTTTSN) shows a compositional bias: low complexity. Residues 365 to 377 (ENDHASSLHEGNL) show a composition bias toward basic and acidic residues. Residues 389 to 402 (DVYDDTDSDSESDQ) are compositionally biased toward acidic residues. The segment covering 409 to 438 (KPRKRDRIKRKIRNSANKTAHHRPIHRTRD) has biased composition (basic residues). The EH domain occupies 460 to 571 (ERKRYESMWV…QCVWDSVDRY (112 aa)).

Belongs to the IRS4 family. As to quaternary structure, interacts with INP51.

Its function is as follows. With TAX4, acts as a positive regulator of INP51 activity and phosphatidylinositol 4,5-bisphosphate turnover. Negatively regulates signaling through the cell integrity pathway, including the MAP kinase SLT2. Also seems to be involved in rDNA silencing. The polypeptide is Increased rDNA silencing protein 4 (IRS4) (Saccharomyces cerevisiae (strain ATCC 204508 / S288c) (Baker's yeast)).